A 259-amino-acid polypeptide reads, in one-letter code: Tryptophan synthase alpha chain (259 aa).

Catalysis depends on proton acceptor residues Glu-52 and Asp-63.

It belongs to the TrpA family. In terms of assembly, tetramer of two alpha and two beta chains.

It carries out the reaction (1S,2R)-1-C-(indol-3-yl)glycerol 3-phosphate + L-serine = D-glyceraldehyde 3-phosphate + L-tryptophan + H2O. The protein operates within amino-acid biosynthesis; L-tryptophan biosynthesis; L-tryptophan from chorismate: step 5/5. In terms of biological role, the alpha subunit is responsible for the aldol cleavage of indoleglycerol phosphate to indole and glyceraldehyde 3-phosphate. The polypeptide is Tryptophan synthase alpha chain (Streptococcus sanguinis (strain SK36)).